The sequence spans 418 residues: MNIFEELKARGLVFQTTDEEALVKALTEGQVSYYTGYDPTADSLHLGHLVAILTSRRLQLAGHKPYALVGGATGLIGDPSFKDAERSLQTKDTVDGWVTKIQGQLSRFLDFENGDNKAEMVNNYDWFSDISFIDFLRDVGKYYTVNYMMSKDSVKKRIETGISYTEFAYQIMQGYDFYELNDKHNVTLQIGGSDQWGNMTAGTELLRRKADKSGHVMTVPLITDSTGKKFGKSEGNAVWLDADKTSPYEMYQFWLNVMDDDAVRFLKIFTFLSLDEIAEIEKQFDAARHERLAQKILAKEVVTLVHGEEAYNQALNITEQLFAGNIKNLSAKELKQGLSNVPNYAVQAEDNLNIVELLVTSGIVNSKRQAREDVQNGAIYVNGERVQDLDYTLSDSDKIDGELTVIRRGKKKYSVLTY.

Position 34 (Y34) interacts with L-tyrosine. The 'HIGH' region motif lies at 39-48; the sequence is PTADSLHLGH. Y169 and Q173 together coordinate L-tyrosine. A 'KMSKS' region motif is present at residues 229–233; it reads KFGKS. K232 contacts ATP. The 59-residue stretch at 352–410 folds into the S4 RNA-binding domain; sequence LNIVELLVTSGIVNSKRQAREDVQNGAIYVNGERVQDLDYTLSDSDKIDGELTVIRRGK.

This sequence belongs to the class-I aminoacyl-tRNA synthetase family. TyrS type 1 subfamily. As to quaternary structure, homodimer.

The protein resides in the cytoplasm. The enzyme catalyses tRNA(Tyr) + L-tyrosine + ATP = L-tyrosyl-tRNA(Tyr) + AMP + diphosphate + H(+). In terms of biological role, catalyzes the attachment of tyrosine to tRNA(Tyr) in a two-step reaction: tyrosine is first activated by ATP to form Tyr-AMP and then transferred to the acceptor end of tRNA(Tyr). The sequence is that of Tyrosine--tRNA ligase from Streptococcus suis (strain 98HAH33).